A 704-amino-acid chain; its full sequence is Sulfate anion transporter 1 (704 aa).

A Phosphothreonine modification is found at threonine 13. Helical transmembrane passes span 68 to 90 and 94 to 116; these read YLAG…AIAY and AGLQ…FLMG. Residues asparagine 158 and asparagine 163 are each glycosylated (N-linked (GlcNAc...) asparagine). The next 7 membrane-spanning stretches (helical) occupy residues 185–207, 260–282, 295–314, 347–369, 382–404, 417–439, and 477–499; these read VATA…RLGF, NVGQ…LLAA, VPIP…SHFG, ALDA…EMFA, LLAV…SAAL, TQLS…APLF, and LVWV…LAGV. Residues 532 to 690 form the STAS domain; the sequence is EFEGLLPPPE…PSVHSAVEAA (159 aa). A Phosphoserine modification is found at serine 587. N-linked (GlcNAc...) asparagine glycosylation occurs at asparagine 588. Serine 590 bears the Phosphoserine mark.

The protein belongs to the SLC26A/SulP transporter (TC 2.A.53) family. Expressed in the heart, cecum, calvaria, brain, liver, skeletal muscle and kidney.

The protein localises to the cell membrane. The protein resides in the basolateral cell membrane. It catalyses the reaction thiosulfate(in) + sulfate(out) = thiosulfate(out) + sulfate(in). It carries out the reaction 2 hydrogencarbonate(out) + sulfate(in) = 2 hydrogencarbonate(in) + sulfate(out). The catalysed reaction is oxalate(in) + sulfate(out) = oxalate(out) + sulfate(in). The enzyme catalyses oxalate(in) + 2 hydrogencarbonate(out) = oxalate(out) + 2 hydrogencarbonate(in). Its function is as follows. Sodium-independent sulfate anion transporter. Can transport other anions including bicarbonate, thiosulfate and oxalate by mediating sulfate-hydrogencarbonate, sulfate-oxalate and oxalate-hydrogencarbonate anion exchange. Mediates sulfate-thiosulfate anion exchange. This chain is Sulfate anion transporter 1 (Slc26a1), found in Mus musculus (Mouse).